A 541-amino-acid polypeptide reads, in one-letter code: DNA polymerase epsilon subunit B (541 aa).

This sequence belongs to the DNA polymerase epsilon subunit B family. Heterotetramer. Consists of four subunits: POL2, DPB2, DPB3 and DPB4.

It is found in the nucleus. Its function is as follows. As accessory component of the DNA polymerase epsilon (DNA polymerase II) participates in chromosomal DNA replication. This Cryptococcus neoformans var. neoformans serotype D (strain B-3501A) (Filobasidiella neoformans) protein is DNA polymerase epsilon subunit B (DPB2).